The following is a 68-amino-acid chain: Small ribosomal subunit protein bS21 (68 aa).

The span at 37–49 (EKPSEKRAREKAA) shows a compositional bias: basic and acidic residues. Positions 37–68 (EKPSEKRAREKAAAVRRARKMERKRMERDGIK) are disordered. Positions 50-59 (AVRRARKMER) are enriched in basic residues.

Belongs to the bacterial ribosomal protein bS21 family.

This is Small ribosomal subunit protein bS21 from Erythrobacter litoralis (strain HTCC2594).